The chain runs to 249 residues: Triosephosphate isomerase (249 aa).

The substrate site is built by asparagine 12 and lysine 14. Lysine 14 bears the N6-acetyllysine mark. Tyrosine 68 bears the 3'-nitrotyrosine mark. Residue serine 80 is modified to Phosphoserine. The active-site Electrophile is the histidine 96. Serine 106 carries the phosphoserine modification. Residue lysine 142 forms a Glycyl lysine isopeptide (Lys-Gly) (interchain with G-Cter in SUMO1) linkage. Lysine 149 carries the N6-succinyllysine modification. An N6-acetyllysine; alternate modification is found at lysine 156. Lysine 156 is modified (N6-succinyllysine; alternate). The residue at position 159 (serine 159) is a Phosphoserine. The active-site Proton acceptor is the glutamate 166. The residue at position 173 (threonine 173) is a Phosphothreonine. Lysine 194 carries the post-translational modification N6-acetyllysine; alternate. N6-succinyllysine; alternate is present on lysine 194. N6-methyllysine; alternate is present on lysine 194. Serine 198 is modified (phosphoserine). Tyrosine 209 carries the 3'-nitrotyrosine modification. Phosphoserine is present on serine 212. Position 214 is a phosphothreonine (threonine 214). Serine 223 carries the post-translational modification Phosphoserine. Lysine 238 carries the N6-acetyllysine modification.

Belongs to the triosephosphate isomerase family. Homodimer.

It localises to the cytoplasm. It catalyses the reaction dihydroxyacetone phosphate = methylglyoxal + phosphate. The catalysed reaction is D-glyceraldehyde 3-phosphate = dihydroxyacetone phosphate. It participates in carbohydrate degradation; glycolysis; D-glyceraldehyde 3-phosphate from glycerone phosphate: step 1/1. It functions in the pathway carbohydrate biosynthesis; gluconeogenesis. Triosephosphate isomerase is an extremely efficient metabolic enzyme that catalyzes the interconversion between dihydroxyacetone phosphate (DHAP) and D-glyceraldehyde-3-phosphate (G3P) in glycolysis and gluconeogenesis. In terms of biological role, it is also responsible for the non-negligible production of methylglyoxal a reactive cytotoxic side-product that modifies and can alter proteins, DNA and lipids. The chain is Triosephosphate isomerase (TPI1) from Macaca fascicularis (Crab-eating macaque).